A 396-amino-acid chain; its full sequence is Putative arsenical pump-driving ATPase 1 (396 aa).

Position 8-15 (8-15) interacts with ATP; the sequence is GKGGVGKT.

This sequence belongs to the arsA ATPase family.

It carries out the reaction arsenite(in) + ATP + H2O = arsenite(out) + ADP + phosphate + H(+). Its function is as follows. Anion-transporting ATPase. Catalyzes the extrusion of arsenite. The sequence is that of Putative arsenical pump-driving ATPase 1 (arsA1) from Aquifex aeolicus (strain VF5).